A 400-amino-acid polypeptide reads, in one-letter code: MTTLGTPLSPSATRVMLLGSGELGKEVLIALQRLGVETIAVDRYENAPGQQVAHHARTITMSDPEQLKALIEAEKPTLVVPEIEAIATPMLQQLEDAGVVRVIPTARAARLTMDREGIRRLAAETLGVPTSPYKFCDSLAELQAAIDAGIGYPCIVKPVMSSSGKGQSKIDGPADVQKAWDYAMAGGRVSHGRVIVEGFIDFDYEITLLTVRAKDAAGAVQTRFCEPIGHVQVSGDYVESWQPHPMAPAALQKAQQIAEAVTSDLGGQGLFGVELFVKGDEVWFSEVSPRPHDTGMVTMATQWQNEFELHARAILGLPVDTSLKSPGASAVIYGGVDATGIAFDGVAEALRVPGSDIRLFGKPESFAKRRMGVALVHAADTGTARRLAKDAASRVKPRKA.

N(1)-(5-phospho-beta-D-ribosyl)glycinamide-binding positions include 22 to 23 (EL) and Glu-82. ATP-binding positions include Arg-115, Lys-157, 162-167 (SSGKGQ), 197-200 (EGFI), and Glu-205. Residues 120-315 (RLAAETLGVP…EFELHARAIL (196 aa)) enclose the ATP-grasp domain. Mg(2+) is bound by residues Glu-274 and Glu-286. Residues Asp-293, Lys-362, and 369–370 (RR) each bind N(1)-(5-phospho-beta-D-ribosyl)glycinamide.

The protein belongs to the PurK/PurT family. In terms of assembly, homodimer.

It catalyses the reaction N(1)-(5-phospho-beta-D-ribosyl)glycinamide + formate + ATP = N(2)-formyl-N(1)-(5-phospho-beta-D-ribosyl)glycinamide + ADP + phosphate + H(+). It functions in the pathway purine metabolism; IMP biosynthesis via de novo pathway; N(2)-formyl-N(1)-(5-phospho-D-ribosyl)glycinamide from N(1)-(5-phospho-D-ribosyl)glycinamide (formate route): step 1/1. Its function is as follows. Involved in the de novo purine biosynthesis. Catalyzes the transfer of formate to 5-phospho-ribosyl-glycinamide (GAR), producing 5-phospho-ribosyl-N-formylglycinamide (FGAR). Formate is provided by PurU via hydrolysis of 10-formyl-tetrahydrofolate. This is Formate-dependent phosphoribosylglycinamide formyltransferase from Variovorax paradoxus (strain S110).